Reading from the N-terminus, the 100-residue chain is Protein alpha-2 (100 aa).

The sequence is that of Protein alpha-2 from Bos taurus (Bovine).